Reading from the N-terminus, the 564-residue chain is 3beta-hydroxysteroid-dehydrogenase/decarboxylase isoform 2 (564 aa).

G16–A21 is a binding site for NAD(+). N-linked (GlcNAc...) asparagine glycosylation is found at N146 and N158. Residues Y161 and K165 each contribute to the NAD(+) site. Residue K165 is the Proton donor of the active site. Residues V384–D564 form the Reticulon domain. The next 2 membrane-spanning stretches (helical) occupy residues I398–V418 and A424–G444. The N-linked (GlcNAc...) asparagine glycan is linked to N474. Transmembrane regions (helical) follow at residues G486–G506 and A507–V527.

It belongs to the 3-beta-HSD family.

It is found in the endoplasmic reticulum membrane. The enzyme catalyses a 3beta-hydroxysteroid-4alpha-carboxylate + NAD(+) = a 3-oxosteroid + CO2 + NADH. It catalyses the reaction 4alpha-carboxy-4beta,14alpha-dimethyl-9beta,19-cyclo-5alpha-ergost-24(24(1))-en-3beta-ol + NAD(+) = cycloeucalenone + CO2 + NADH. Its pathway is steroid biosynthesis; zymosterol biosynthesis; zymosterol from lanosterol: step 4/6. In terms of biological role, 3beta-hydroxysteroid-dehydrogenase/decarboxylase involved in sterol synthesis. Catalyzes the formation of 3-oxosteroids from 3beta-hydroxysteroids-4alpha-carboxylate. Involved in the regulation of inflorescence internodes and leaves growth, probably by affecting auxin transporter activity possibly by altering sterol composition in the membranes. This chain is 3beta-hydroxysteroid-dehydrogenase/decarboxylase isoform 2, found in Arabidopsis thaliana (Mouse-ear cress).